A 438-amino-acid chain; its full sequence is MTAKLEKIENSEAYIEIEVSAEQVEEGLQYAYRKVIKQVAIPGFRKGKAPRELLELQFGKEVLFQDALEYIVPEAYDKALEELNIKPIAQPEFDINDPESGQPFKFNARVPVKPEVKLGEIEGIEVEIPDFQVKEEDVIQKFEDMRQQYAQVVEKIEEPAAMGDKLNIDFEGFIDGEAFAGGKGEDYSLELGSNTFIPGFEEQLVGLKAGESKDVLVTFPESYHAEDLAGKDAVFQVSVKRIETTEARELNDEFAQEVSQFNTIDELRQDIRKNLEEMAESRRKESIKTELMEKALEKCDIPVPDAVINMQVERMLQDFEQRMAYQGLTLEQYFQFTNSNREDFSQKIWPEAEKSVKGDFMLEKLAEEKGMEVSEEELNEHIMKLANNFGMEVDKIKEELGDAIENIRTGLKIDKAIDFLIDKAVVKEVAEITAAAAE.

In terms of domain architecture, PPIase FKBP-type spans 163–248 (GDKLNIDFEG…VKRIETTEAR (86 aa)).

This sequence belongs to the FKBP-type PPIase family. Tig subfamily.

Its subcellular location is the cytoplasm. The catalysed reaction is [protein]-peptidylproline (omega=180) = [protein]-peptidylproline (omega=0). In terms of biological role, involved in protein export. Acts as a chaperone by maintaining the newly synthesized protein in an open conformation. Functions as a peptidyl-prolyl cis-trans isomerase. In Syntrophomonas wolfei subsp. wolfei (strain DSM 2245B / Goettingen), this protein is Trigger factor.